Reading from the N-terminus, the 66-residue chain is Stress-induced protein KIN2 (66 aa).

The segment covering 1 to 10 (MSETNKNAFQ) has biased composition (polar residues). The interval 1–20 (MSETNKNAFQAGQAAGKAEE) is disordered. 2 consecutive repeats follow at residues 31-35 (DAAAA) and 49-53 (DAAVG).

In terms of assembly, interacts with DEK3. In terms of tissue distribution, expressed at high levels in embryos and mature seeds.

This Arabidopsis thaliana (Mouse-ear cress) protein is Stress-induced protein KIN2.